The chain runs to 31 residues: Photosystem II reaction center protein T (31 aa).

Residues 3–23 (ALVYTFLLIGTLGVIFFAIFF) form a helical membrane-spanning segment.

The protein belongs to the PsbT family. PSII is composed of 1 copy each of membrane proteins PsbA, PsbB, PsbC, PsbD, PsbE, PsbF, PsbH, PsbI, PsbJ, PsbK, PsbL, PsbM, PsbT, PsbY, PsbZ, Psb30/Ycf12, at least 3 peripheral proteins of the oxygen-evolving complex and a large number of cofactors. It forms dimeric complexes.

It localises to the plastid. Its subcellular location is the chloroplast thylakoid membrane. Its function is as follows. Found at the monomer-monomer interface of the photosystem II (PS II) dimer, plays a role in assembly and dimerization of PSII. PSII is a light-driven water plastoquinone oxidoreductase, using light energy to abstract electrons from H(2)O, generating a proton gradient subsequently used for ATP formation. This Euglena gracilis protein is Photosystem II reaction center protein T.